A 452-amino-acid polypeptide reads, in one-letter code: Lamina-associated polypeptide 2, isoform beta (452 aa).

Residues 1–409 are nucleoplasmic; sequence MPEFLEDPSV…KSEKTKKGRS (409 aa). The LEM-like domain occupies 5–48; sequence LEDPSVLTKDKLKSELVANNVTLPAGEQRKDVYVQLYLQHLTAR. Disordered regions lie at residues 48–113 and 149–264; these read RNRP…DVTE and REQG…VEPS. A linker region spans residues 49–107; it reads NRPPLAAGANSKGPPDFSSDEEREPTPVLGSGASVGRGRGAVGRKATKKTDKPRPEDKD. Residues Ser-66 and Ser-67 each carry the phosphoserine modification. Thr-74 is subject to Phosphothreonine. Residue Ser-82 is modified to Phosphoserine. Omega-N-methylarginine is present on residues Arg-85 and Arg-87. Residues 96 to 105 are compositionally biased toward basic and acidic residues; the sequence is KKTDKPRPED. The LEM domain occupies 108-152; the sequence is DLDVTELSNEELLEQLVRYGVNPGPIVGTTRKLYEKKLLKLREQG. The NAKAP95-binding N stretch occupies residues 137-242; it reads TRKLYEKKLL…TSGSSKGGPL (106 aa). Polar residues predominate over residues 154-177; that stretch reads ESRSSTPLPTVSSSAENTRQNGSN. Phosphoserine is present on residues Ser-155 and Ser-158. Position 159 is a phosphothreonine (Thr-159). Residues Ser-165, Ser-167, Ser-176, Ser-179, and Ser-183 each carry the phosphoserine modification. Positions 178–202 are enriched in basic and acidic residues; the sequence is DSDRYSDNDEDSKIELKLEKREPLK. The residue at position 206 (Lys-206) is an N6-acetyllysine. Residues 298 to 370 are binds lamins B; that stretch reads TGNFKHASSI…SCRRPIKGAA (73 aa). Residues 299–373 are NAKAP95-binding C; the sequence is GNFKHASSIL…RPIKGAAGRP (75 aa). Residues Ser-305, Ser-306, and Ser-361 each carry the phosphoserine modification. Position 388 is an N6-acetyllysine (Lys-388). A helical; Signal-anchor for type II membrane protein transmembrane segment spans residues 410–430; that stretch reads VPMWIKMLLFALVAGFLFLVY. The Lumenal portion of the chain corresponds to 431–452; sequence QAMETNQGNPFTNFLQDTKISN.

The protein belongs to the LEM family. In terms of assembly, interacts with LMNB1, LMNB2, BANF1, AKAP8L, GMCL and chromosomes. Mitosis-specific phosphorylation specifically abolishes its binding to lamin B and chromosomes.

The protein resides in the nucleus inner membrane. The protein localises to the chromosome. In terms of biological role, binds directly to lamin B1 and chromosomes in a mitotic phosphorylation-regulated manner. May play an important role in nuclear envelope reassembly at the end of mitosis and/or anchoring of the nuclear lamina and interphase chromosomes to the nuclear envelope. In Rattus norvegicus (Rat), this protein is Lamina-associated polypeptide 2, isoform beta (Tmpo).